The primary structure comprises 81 residues: Small ribosomal subunit protein bS18 (81 aa).

It belongs to the bacterial ribosomal protein bS18 family. Part of the 30S ribosomal subunit. Forms a tight heterodimer with protein bS6.

Its function is as follows. Binds as a heterodimer with protein bS6 to the central domain of the 16S rRNA, where it helps stabilize the platform of the 30S subunit. The protein is Small ribosomal subunit protein bS18 of Parvibaculum lavamentivorans (strain DS-1 / DSM 13023 / NCIMB 13966).